A 151-amino-acid chain; its full sequence is MASVEVESAATALPKNETPEVTKAEETKTEEPAAPPASEQETADATPEKEEPTAAPAEPEAPAPETEKAEEVEKIEKTEEPAPEADQTTPEEKPAEPEPVAEEEPKHETKETETEAPAAPAEGEKPAEEEKPITEAAETATTEVPVEKTEE.

A disordered region spans residues 1-151 (MASVEVESAA…TEVPVEKTEE (151 aa)). A2 bears the N-acetylalanine mark. Positions 17-31 (ETPEVTKAEETKTEE) are enriched in basic and acidic residues. Low complexity-rich tracts occupy residues 36–45 (PASEQETADA) and 53–64 (TAAPAEPEAPAP). Composition is skewed to basic and acidic residues over residues 65–80 (ETEKAEEVEKIEKTEE), 103–113 (EEPKHETKETE), and 122–133 (EGEKPAEEEKPI). Positions 134 to 144 (TEAAETATTEV) are enriched in low complexity.

It to kiwi fruit protein PKIWI501. In terms of processing, the N-terminus is blocked.

The chain is Major latex allergen Hev b 5 from Hevea brasiliensis (Para rubber tree).